We begin with the raw amino-acid sequence, 289 residues long: MDIGLREWLIVIGLIVIAGILFDGWRRMRGGKGKLKFKLDRSFANLPDDDGDSAELLGPARVVEHREPSFDEQDLPSVSARETKERKGGKRQEEPRQGDLDLDEGLALEADPSDAAEPVEPRKGKSKGRKEKEREKAPAVAAEPAPVDEVLIINVIARDESGFKGPALLQNILESGLRFGDMDIFHRHESMAGNGEILFSMANAVKPGTFDLDDIDNFSTRAVSFFLGLPGPRHPKQAFDVMVAAARKLAHELNGELKDEQRSVLTAQTIEHYRQRIIDHERRSLMQKR.

Residue Met1 is a topological domain, periplasmic. Residues 2–22 (DIGLREWLIVIGLIVIAGILF) form a helical membrane-spanning segment. Residues 23-289 (DGWRRMRGGK…HERRSLMQKR (267 aa)) lie on the Cytoplasmic side of the membrane. The segment at 65–141 (HREPSFDEQD…KEREKAPAVA (77 aa)) is disordered. The segment covering 81–99 (RETKERKGGKRQEEPRQGD) has biased composition (basic and acidic residues). The span at 100–114 (LDLDEGLALEADPSD) shows a compositional bias: acidic residues.

It belongs to the ZipA family. In terms of assembly, interacts with FtsZ via their C-terminal domains.

It is found in the cell inner membrane. In terms of biological role, essential cell division protein that stabilizes the FtsZ protofilaments by cross-linking them and that serves as a cytoplasmic membrane anchor for the Z ring. Also required for the recruitment to the septal ring of downstream cell division proteins. The chain is Cell division protein ZipA from Pseudomonas aeruginosa (strain UCBPP-PA14).